The chain runs to 505 residues: Deoxyguanosinetriphosphate triphosphohydrolase (505 aa).

In terms of domain architecture, HD spans 66-273; that stretch reads RLTHSMEVQQ…MEAADDISYC (208 aa).

The protein belongs to the dGTPase family. Type 1 subfamily. In terms of assembly, homotetramer. Mg(2+) serves as cofactor.

The catalysed reaction is dGTP + H2O = 2'-deoxyguanosine + triphosphate + H(+). In terms of biological role, dGTPase preferentially hydrolyzes dGTP over the other canonical NTPs. This Escherichia coli O139:H28 (strain E24377A / ETEC) protein is Deoxyguanosinetriphosphate triphosphohydrolase.